We begin with the raw amino-acid sequence, 199 residues long: Homeobox protein ceh-19 (199 aa).

The disordered stretch occupies residues 1–42; the sequence is MAFNIESLLEKKSNPVEEGNDFEEENDSEKNGEEDEEEEEKN. Residues 18–40 show a composition bias toward acidic residues; sequence EGNDFEEENDSEKNGEEDEEEEE. Residues 94–153 constitute a DNA-binding region (homeobox); the sequence is ERKPRQAYSARQLDRLETEFQTDKYLSVNKRIQLSQTLNLTETQIKTWFQNRRTKWKKQL.

Its subcellular location is the nucleus. In terms of biological role, probable transcription factor. Required for MC motor neuron differentiation and function, including role in modulating pharyngeal pumping. Regulates gene expression of FMRFamide-like neuropeptide flp-2 in MC motor neurons. May act downstream of transcription factor pha-4. The protein is Homeobox protein ceh-19 (ceh-19) of Caenorhabditis elegans.